The chain runs to 513 residues: ATP synthase subunit alpha (513 aa).

169-176 (GDRKTGKS) serves as a coordination point for ATP.

Belongs to the ATPase alpha/beta chains family. As to quaternary structure, F-type ATPases have 2 components, CF(1) - the catalytic core - and CF(0) - the membrane proton channel. CF(1) has five subunits: alpha(3), beta(3), gamma(1), delta(1), epsilon(1). CF(0) has three main subunits: a(1), b(2) and c(9-12). The alpha and beta chains form an alternating ring which encloses part of the gamma chain. CF(1) is attached to CF(0) by a central stalk formed by the gamma and epsilon chains, while a peripheral stalk is formed by the delta and b chains.

It localises to the cell membrane. The catalysed reaction is ATP + H2O + 4 H(+)(in) = ADP + phosphate + 5 H(+)(out). In terms of biological role, produces ATP from ADP in the presence of a proton gradient across the membrane. The alpha chain is a regulatory subunit. The polypeptide is ATP synthase subunit alpha (Levilactobacillus brevis (strain ATCC 367 / BCRC 12310 / CIP 105137 / JCM 1170 / LMG 11437 / NCIMB 947 / NCTC 947) (Lactobacillus brevis)).